The following is an 812-amino-acid chain: Lon protease (812 aa).

In terms of domain architecture, Lon N-terminal spans 22 to 215 (YAVLPLRDIV…KALSFMEAEI (194 aa)). 367–374 (GPPGVGKT) is an ATP binding site. A Lon proteolytic domain is found at 602 to 783 (EDQVGVVTGL…GEVLKHTLVR (182 aa)). Residues S689 and K732 contribute to the active site. A disordered region spans residues 787–812 (PIEWTEQENPTAVPPVEDEAGASLAH).

This sequence belongs to the peptidase S16 family. As to quaternary structure, homohexamer. Organized in a ring with a central cavity.

It localises to the cytoplasm. It catalyses the reaction Hydrolysis of proteins in presence of ATP.. ATP-dependent serine protease that mediates the selective degradation of mutant and abnormal proteins as well as certain short-lived regulatory proteins. Required for cellular homeostasis and for survival from DNA damage and developmental changes induced by stress. Degrades polypeptides processively to yield small peptide fragments that are 5 to 10 amino acids long. Binds to DNA in a double-stranded, site-specific manner. In Brucella suis biovar 1 (strain 1330), this protein is Lon protease.